A 198-amino-acid chain; its full sequence is MKKILLSLCFLSSVAFASPQGELTDRLNQNKGFEASFTQKVLSPEGDVLMQGEGDVKILRPNLFRWHTQTPDENLLVTDGKTLWYYNPFVEQVTLMGLDQATTQTPFVLLTRNKASDWDNYSVAQNGDAFTVSPKSDSAIKSEFIVRIQPSGKVTGFSVVEQDGQRSDFNFTTFEAKKPAQSNFMFTVPDGVDIDDQR.

The first 17 residues, 1 to 17, serve as a signal peptide directing secretion; the sequence is MKKILLSLCFLSSVAFA.

This sequence belongs to the LolA family. As to quaternary structure, monomer.

The protein localises to the periplasm. In terms of biological role, participates in the translocation of lipoproteins from the inner membrane to the outer membrane. Only forms a complex with a lipoprotein if the residue after the N-terminal Cys is not an aspartate (The Asp acts as a targeting signal to indicate that the lipoprotein should stay in the inner membrane). The sequence is that of Outer-membrane lipoprotein carrier protein from Aliivibrio salmonicida (strain LFI1238) (Vibrio salmonicida (strain LFI1238)).